We begin with the raw amino-acid sequence, 344 residues long: Meiotic recombination protein DMC1 homolog A (344 aa).

ATP is bound at residue Gly-133–Thr-140. Arg-235 contacts dsDNA. Arg-235, Phe-238, Arg-241, Arg-247, and Arg-315 together coordinate ssDNA. Residues Arg-241 and Arg-247 each coordinate dsDNA.

This sequence belongs to the RecA family. DMC1 subfamily. In terms of tissue distribution, expressed in meiotic young panicles.

The protein localises to the nucleus. In terms of biological role, recombinase that may participate in meiotic recombination, specifically in homologous strand assimilation, which is required for the resolution of meiotic double-strand breaks. Exhibits DNA-dependent ATPase activity when bound to single-stranded DNA (ssDNA). Mediates renaturation of homologous complementary strands as well as assimilation of single strands into homologous supercoiled duplexes leading to D-loop formation. Binds circular single-stranded DNA (ssDNA) and circular double-stranded DNA (dsDNA) in vitro. Catalyzes DNA homologous renaturation and DNA strand exchange. The rates of these activities are dependent on the state of ATP hydrolysis. Forms helical filaments along ssDNA and dsDNA, and promotes strand exchange between ssDNA and dsDNA with long DNA substrates of several thousand base pairs. The presence of the replication protein A is not required for this activity. Seems to be required for homologous pairing and subsequent chromosome segregation during male meiosis. May be not directly required for homologous pairing during male meiosis. Required for synaptonemal complex assembly and crossover formation. Functions redundantly with DMC1B. The protein is Meiotic recombination protein DMC1 homolog A of Oryza sativa subsp. japonica (Rice).